Consider the following 340-residue polypeptide: MLSLSKNWNTLIKPNRVAYENFPEINNKAKIVVEPLERGFGLTLGNAMRRVLLSSLQGAAITSIKIPAIEHEFSSIPGVKEDVSEVILNIKGVELKMHVAEKRIMKLKATGPCVVTAGMIETGHDVEILNPDHIICNLAKNKQLEMALTCKVGKGYVLSTNSYEDDLPIGEIAIDALFNPVKSVTYKVENTRVGQVTDYDKLIMFVETNGGLLPEMAVGLAARILQEQLQLFISFEEHEEDKQVKTDTLPFSPYLLKRVDELELSVRSANCLKNDNIIYIGDLVKRTESDMLRTPNFGRKSLNEIKEILAKFNLRFGMDVPDWPPENIQELSKRYEDSYN.

The interval 1–236 is alpha N-terminal domain (alpha-NTD); it reads MLSLSKNWNT…EQLQLFISFE (236 aa). The alpha C-terminal domain (alpha-CTD) stretch occupies residues 251 to 340; that stretch reads FSPYLLKRVD…LSKRYEDSYN (90 aa).

Belongs to the RNA polymerase alpha chain family. As to quaternary structure, homodimer. The RNAP catalytic core consists of 2 alpha, 1 beta, 1 beta' and 1 omega subunit. When a sigma factor is associated with the core the holoenzyme is formed, which can initiate transcription.

It carries out the reaction RNA(n) + a ribonucleoside 5'-triphosphate = RNA(n+1) + diphosphate. DNA-dependent RNA polymerase catalyzes the transcription of DNA into RNA using the four ribonucleoside triphosphates as substrates. This is DNA-directed RNA polymerase subunit alpha from Rickettsia akari (strain Hartford).